The chain runs to 344 residues: Ferrochelatase (344 aa).

2 residues coordinate Fe cation: histidine 196 and glutamate 277.

It belongs to the ferrochelatase family.

It is found in the cytoplasm. The enzyme catalyses heme b + 2 H(+) = protoporphyrin IX + Fe(2+). The protein operates within porphyrin-containing compound metabolism; protoheme biosynthesis; protoheme from protoporphyrin-IX: step 1/1. In terms of biological role, catalyzes the ferrous insertion into protoporphyrin IX. The protein is Ferrochelatase of Synechococcus sp. (strain JA-2-3B'a(2-13)) (Cyanobacteria bacterium Yellowstone B-Prime).